Here is a 502-residue protein sequence, read N- to C-terminus: ATP synthase subunit alpha (502 aa).

Residues 115-135 form a disordered region; it reads VDGLGPINTTNTRPIESPAPG. 169–176 is a binding site for ATP; it reads GDRQTGKT.

It belongs to the ATPase alpha/beta chains family. F-type ATPases have 2 components, CF(1) - the catalytic core - and CF(0) - the membrane proton channel. CF(1) has five subunits: alpha(3), beta(3), gamma(1), delta(1), epsilon(1). CF(0) has three main subunits: a(1), b(2) and c(9-12). The alpha and beta chains form an alternating ring which encloses part of the gamma chain. CF(1) is attached to CF(0) by a central stalk formed by the gamma and epsilon chains, while a peripheral stalk is formed by the delta and b chains.

Its subcellular location is the cell membrane. It carries out the reaction ATP + H2O + 4 H(+)(in) = ADP + phosphate + 5 H(+)(out). Produces ATP from ADP in the presence of a proton gradient across the membrane. The alpha chain is a regulatory subunit. In Bacillus cereus (strain G9842), this protein is ATP synthase subunit alpha.